A 399-amino-acid chain; its full sequence is MAKEKFVRTKPHVNVGTIGHIDHGKTTLTAAITKYLSYKGFASFVPFEQIDKAPEEKARGITINITHVEYQSEKRHYAHIDCPGHADYIKNMITGAAQMDGAILVVAATDGPMPQTREHVLLARQVNVPAMVVFLNKVDAVDDQELVDLVEMEVRDLLTKYEFPGDEIPVIRGSALLALEANDPNDAAYKPIQELIDALDSYIPEPVREVDKPFLMAVEDVFSITGRGTVATGRIERGKIRPGDEVEIVGLSYETRKTVVTSVEMFRKELDEGLAGDNVGCLLRGIDKDEIERGQVLAAPGSITPHTTFKANVYVLKKEEGGRHTPFMKGYRPQFFIRTADVTGEITELGNNAEMVMPGDNAILTIKLIYPVAIEKGMRFAIREGGRTVGAGVVAEIVE.

The 198-residue stretch at 10–207 folds into the tr-type G domain; the sequence is KPHVNVGTIG…ALDSYIPEPV (198 aa). The G1 stretch occupies residues 19–26; that stretch reads GHIDHGKT. 19–26 is a binding site for GTP; that stretch reads GHIDHGKT. Position 26 (threonine 26) interacts with Mg(2+). The interval 60–64 is G2; that stretch reads GITIN. Positions 81–84 are G3; sequence DCPG. GTP is bound by residues 81–85 and 136–139; these read DCPGH and NKVD. Residues 136–139 are G4; it reads NKVD. Positions 174-176 are G5; that stretch reads SAL.

The protein belongs to the TRAFAC class translation factor GTPase superfamily. Classic translation factor GTPase family. EF-Tu/EF-1A subfamily. Monomer.

The protein resides in the cytoplasm. The catalysed reaction is GTP + H2O = GDP + phosphate + H(+). Its function is as follows. GTP hydrolase that promotes the GTP-dependent binding of aminoacyl-tRNA to the A-site of ribosomes during protein biosynthesis. The polypeptide is Elongation factor Tu (Pseudothermotoga lettingae (strain ATCC BAA-301 / DSM 14385 / NBRC 107922 / TMO) (Thermotoga lettingae)).